Here is a 115-residue protein sequence, read N- to C-terminus: Xenovulene A biosynthesis cluster protein asL2 (115 aa).

In terms of biological role, part of the gene cluster that mediates the biosynthesis of xenovulene A, an unusual meroterpenoid that has potent inhibitory effects on the human gamma-aminobutyrate A (GABAA) benzodiazepine receptor. The first step of xenovulene A biosynthesis is the biosynthesis of 3-methylorcinaldehyde performed by the non-reducing polyketide synthase aspks1. The salicylate hydroxylase asL1 then catalyzes the oxidative dearomatization of 3-methylorcinaldehyde to yield a dearomatized hydroxycyclohexadione. The 2-oxoglutarate-dependent dioxygenase asL3 further catalyzes the oxidative ring expansion to provide the first tropolone metabolite. The cytochrome P450 monooxygenase asR2 allows the synthesis of tropolone hemiacetal. In parallel, a previously unrecognised class of terpene cyclase, asR6, produces alpha-humulene from farnesylpyrophosphate (FPP). The putative Diels-Alderase asR5 probably catalyzes the formation of the tropolone-humulene skeleton by linking humulene and the polyketide moiety. Oxidative-ring contractions catalyzed by asL4 and asL6 then processively remove carbon atoms from the polyketide to yield xenovulene A. The sequence is that of Xenovulene A biosynthesis cluster protein asL2 from Sarocladium schorii (Acremonium strictum (strain IMI 501407)).